Here is an 878-residue protein sequence, read N- to C-terminus: Outer membrane usher protein FimD (878 aa).

A signal peptide spans 1–45; sequence MSYLNLRLYQRNTQCLHIRKHRLAGFFVRLVVACAFAAQAPLSSA. C855 and C877 are disulfide-bonded.

Belongs to the fimbrial export usher family.

The protein resides in the cell outer membrane. In terms of biological role, involved in the export and assembly of FimA fimbrial subunits across the outer membrane. In Escherichia coli (strain K12), this protein is Outer membrane usher protein FimD (fimD).